The sequence spans 77 residues: DNA-directed RNA polymerase subunit omega (77 aa).

This sequence belongs to the RNA polymerase subunit omega family. The RNAP catalytic core consists of 2 alpha, 1 beta, 1 beta' and 1 omega subunit. When a sigma factor is associated with the core the holoenzyme is formed, which can initiate transcription.

It carries out the reaction RNA(n) + a ribonucleoside 5'-triphosphate = RNA(n+1) + diphosphate. Promotes RNA polymerase assembly. Latches the N- and C-terminal regions of the beta' subunit thereby facilitating its interaction with the beta and alpha subunits. This chain is DNA-directed RNA polymerase subunit omega, found in Dichelobacter nodosus (strain VCS1703A).